An 86-amino-acid polypeptide reads, in one-letter code: Probable weak neurotoxin NNAM1 (86 aa).

A signal peptide spans methionine 1 to threonine 21. 5 disulfides stabilise this stretch: cysteine 24–cysteine 45, cysteine 27–cysteine 32, cysteine 38–cysteine 63, cysteine 67–cysteine 78, and cysteine 79–cysteine 84.

Belongs to the three-finger toxin family. Ancestral subfamily. Orphan group II sub-subfamily. Expressed by the venom gland.

The protein localises to the secreted. In terms of biological role, binds with low affinity to muscular (alpha-1-beta-1-delta-epsilon/CHRNA1-CHRNB1-CHRND-CHRNE) and very low affinity to neuronal (alpha-7/CHRNA7) nicotinic acetylcholine receptor (nAChR). This is Probable weak neurotoxin NNAM1 from Naja atra (Chinese cobra).